The following is a 362-amino-acid chain: Putative glutamate--cysteine ligase 2-1 (362 aa).

Belongs to the glutamate--cysteine ligase type 2 family. YbdK subfamily.

The enzyme catalyses L-cysteine + L-glutamate + ATP = gamma-L-glutamyl-L-cysteine + ADP + phosphate + H(+). ATP-dependent carboxylate-amine ligase which exhibits weak glutamate--cysteine ligase activity. In Streptomyces avermitilis (strain ATCC 31267 / DSM 46492 / JCM 5070 / NBRC 14893 / NCIMB 12804 / NRRL 8165 / MA-4680), this protein is Putative glutamate--cysteine ligase 2-1.